The primary structure comprises 218 residues: Uracil-DNA glycosylase (218 aa).

Aspartate 59 serves as the catalytic Proton acceptor.

This sequence belongs to the uracil-DNA glycosylase (UDG) superfamily. UNG family.

The protein resides in the cytoplasm. The catalysed reaction is Hydrolyzes single-stranded DNA or mismatched double-stranded DNA and polynucleotides, releasing free uracil.. Excises uracil residues from the DNA which can arise as a result of misincorporation of dUMP residues by DNA polymerase or due to deamination of cytosine. In Staphylococcus saprophyticus subsp. saprophyticus (strain ATCC 15305 / DSM 20229 / NCIMB 8711 / NCTC 7292 / S-41), this protein is Uracil-DNA glycosylase.